The sequence spans 253 residues: Sulfate transporter CysZ (253 aa).

The next 4 helical transmembrane spans lie at 31–51 (FVIL…WWLF), 72–92 (LSYL…GYFF), 151–171 (IVLL…PVLW), and 222–242 (IPVL…AMWV).

This sequence belongs to the CysZ family.

The protein localises to the cell inner membrane. Functionally, possibly involved in sulfate transport. Its function is as follows. High affinity, high specificity proton-dependent sulfate transporter, which mediates sulfate uptake. Provides the sulfur source for the cysteine synthesis pathway. This is Sulfate transporter CysZ from Salmonella typhimurium (strain LT2 / SGSC1412 / ATCC 700720).